The chain runs to 1921 residues: Putative callose synthase 6 (1921 aa).

The tract at residues 1–23 (MEASSSGTAELPRSLSRRAPSRA) is disordered. The Cytoplasmic portion of the chain corresponds to 1–492 (MEASSSGTAE…FWNLFRDFDR (492 aa)). The helical transmembrane segment at 493–513 (MWIFLVMAFQAMVIVGWHGSG) threads the bilayer. Residues 514–526 (SLGDIFDKDVFKT) lie on the Extracellular side of the membrane. The helical transmembrane segment at 527 to 547 (VLTIFITSAYLTLLQAALDII) threads the bilayer. The Cytoplasmic portion of the chain corresponds to 548–560 (LNFNAWKNFKFSQ). Residues 561-581 (ILRYLLKFAVAFMWAVLLPIA) form a helical membrane-spanning segment. Over 582 to 611 (YSKSVQRPTGVVKFFSTWTGDWKDQSFYTY) the chain is Extracellular. Residues 612 to 632 (AVSFYVLPNILAALLFLVPPF) form a helical membrane-spanning segment. At 633–674 (RRAMECSDMRPIKVIMWWAQPKLYVGRGMHEDMFSLFKYTTF) the chain is on the cytoplasmic side. Residues 675 to 695 (WIMLLISKLAFNYYVEILPLI) form a helical membrane-spanning segment. Over 696-721 (TPTKMIMNLHIGHYQWHEFFPHATNN) the chain is Extracellular. The helical transmembrane segment at 722 to 742 (IGVVIAIWAPIVLVYLMDTQI) threads the bilayer. The Cytoplasmic portion of the chain corresponds to 743–1484 (WYAIFSTLFG…FDFYRMLSFY (742 aa)). A helical membrane pass occupies residues 1485-1505 (FTTIGFYFSSMLTVLTVYAFL). Residues 1506–1540 (YGRMYMVMSGLEKEILRLASPNQLEALEQALATQS) are Extracellular-facing. The helical transmembrane segment at 1541-1561 (IFQLGFLMVLPMVMEIGLEHG) threads the bilayer. The Cytoplasmic segment spans residues 1562-1564 (FRS). A helical membrane pass occupies residues 1565–1585 (AIVDFFIMQLQLASVFFTFQL). The Extracellular segment spans residues 1586 to 1628 (GTKSHYYGRTILHGGSKYRPTGRGFVVFHAKFAENYRLYSRSH). The chain crosses the membrane as a helical span at residues 1629 to 1649 (FVKGLELLLLLVVYQIYGHSY). Residues 1650-1655 (RSSNLY) lie on the Cytoplasmic side of the membrane. Residues 1656–1676 (LYITVSMWFMVGSWLFAPFIF) form a helical membrane-spanning segment. Topologically, residues 1677–1730 (NPSGFEWQKTVDDWTDWKRWLGDRGGIGIPVEKSWESWWNVEQEHLKHTSIRGR) are extracellular. A helical membrane pass occupies residues 1731–1751 (ILEITLALRFFIYQYGIVYQL). Topologically, residues 1752–1759 (NISQRSKS) are cytoplasmic. A helical membrane pass occupies residues 1760 to 1780 (FLVYGLSWVVLLTSLLVLKMV). The Extracellular segment spans residues 1781 to 1796 (SMGRRRFGTDFQLMFR). A helical membrane pass occupies residues 1797–1817 (ILKALLFLGFLSVMTILFVVF). The Cytoplasmic segment spans residues 1818–1823 (KLTLTD). A helical membrane pass occupies residues 1824-1844 (LSASVLAFLPTGWAILLIGQV). Residues 1845 to 1867 (LRSPIKALGVWDSVKELGRAYEN) are Extracellular-facing. A helical membrane pass occupies residues 1868–1888 (IMGLVIFAPIAVLSWFPIVSE). At 1889-1921 (FQARLLFNQAFSRGLQISMILAGRKDKATSSHK) the chain is on the cytoplasmic side.

It belongs to the glycosyltransferase 48 family.

Its subcellular location is the cell membrane. The enzyme catalyses [(1-&gt;3)-beta-D-glucosyl](n) + UDP-alpha-D-glucose = [(1-&gt;3)-beta-D-glucosyl](n+1) + UDP + H(+). Probably involved in callose synthesis, but not required for callose formation after wounding or pathogen attack. During plant growth and development, callose is found as a transitory component of the cell plate in dividing cells, is a major component of pollen mother cell walls and pollen tubes, and is found as a structural component of plasmodesmatal canals. The chain is Putative callose synthase 6 (CALS6) from Arabidopsis thaliana (Mouse-ear cress).